The primary structure comprises 581 residues: Neither inactivation nor afterpotential protein G (581 aa).

A signal peptide spans 1–26 (MGMKFQKILVLAGIVIGFLSIIVVLA). Residue 48–77 (DYVIVGGGTGGSTLTSLLAKNSNGSVLLIE) coordinates FAD. N-linked (GlcNAc...) asparagine glycans are attached at residues Asn-70, Asn-156, Asn-404, and Asn-464. His-516 functions as the Proton acceptor in the catalytic mechanism.

The protein belongs to the GMC oxidoreductase family. FAD is required as a cofactor.

The protein localises to the secreted. In terms of biological role, oxidoreductase involved in biosynthesis of 3-hydroxyretinal, a chromophore for rhodopsin Rh1. Not responsible for the initial hydroxylation of the retinal ring but rather acts in a subsequent step in chromophore production. May catalyze the conversion of (3R)-3-hydroxyretinol to the 3S enantiomer. This Drosophila melanogaster (Fruit fly) protein is Neither inactivation nor afterpotential protein G (ninaG).